Here is a 157-residue protein sequence, read N- to C-terminus: Nucleoside deoxyribosyltransferase (157 aa).

Glu-98 functions as the Nucleophile in the catalytic mechanism.

This sequence belongs to the nucleoside deoxyribosyltransferase family. As to quaternary structure, homohexamer.

The enzyme catalyses 2-deoxy-D-ribosyl-base(1) + base(2) = 2-deoxy-D-ribosyl-base(2) + base(1).. The protein operates within nucleotide metabolism; nucleotide salvage pathway. Functionally, catalyzes the cleavage of the glycosidic bond of 2'-deoxyribonucleosides and the transfer of the deoxyribosyl moiety to an acceptor purine or pyrimidine base. The protein is Nucleoside deoxyribosyltransferase (ntd) of Lactobacillus leichmannii.